We begin with the raw amino-acid sequence, 304 residues long: Acetylglutamate kinase (304 aa).

Substrate is bound by residues 69-70 (GG), arginine 91, and asparagine 202.

This sequence belongs to the acetylglutamate kinase family. ArgB subfamily.

The protein localises to the cytoplasm. The enzyme catalyses N-acetyl-L-glutamate + ATP = N-acetyl-L-glutamyl 5-phosphate + ADP. Its pathway is amino-acid biosynthesis; L-arginine biosynthesis; N(2)-acetyl-L-ornithine from L-glutamate: step 2/4. Functionally, catalyzes the ATP-dependent phosphorylation of N-acetyl-L-glutamate. This chain is Acetylglutamate kinase, found in Caulobacter vibrioides (strain ATCC 19089 / CIP 103742 / CB 15) (Caulobacter crescentus).